We begin with the raw amino-acid sequence, 31 residues long: Cytochrome b6-f complex subunit 6 (31 aa).

A helical transmembrane segment spans residues 4 to 24 (ITSYFGFLLVALTITSALFIG).

The protein belongs to the PetL family. In terms of assembly, the 4 large subunits of the cytochrome b6-f complex are cytochrome b6, subunit IV (17 kDa polypeptide, PetD), cytochrome f and the Rieske protein, while the 4 small subunits are PetG, PetL, PetM and PetN. The complex functions as a dimer.

Its subcellular location is the plastid. The protein resides in the chloroplast thylakoid membrane. Functionally, component of the cytochrome b6-f complex, which mediates electron transfer between photosystem II (PSII) and photosystem I (PSI), cyclic electron flow around PSI, and state transitions. PetL is important for photoautotrophic growth as well as for electron transfer efficiency and stability of the cytochrome b6-f complex. The chain is Cytochrome b6-f complex subunit 6 from Pelargonium hortorum (Common geranium).